Here is a 210-residue protein sequence, read N- to C-terminus: LexA repressor (210 aa).

A DNA-binding region (H-T-H motif) is located at residues 25–44; it reads AGQVAQEVGITKQAISQQVN. Residues S120 and K159 each act as for autocatalytic cleavage activity in the active site.

It belongs to the peptidase S24 family. Homodimer.

The enzyme catalyses Hydrolysis of Ala-|-Gly bond in repressor LexA.. Represses a number of genes involved in the response to DNA damage (SOS response), including recA and lexA. In the presence of single-stranded DNA, RecA interacts with LexA causing an autocatalytic cleavage which disrupts the DNA-binding part of LexA, leading to derepression of the SOS regulon and eventually DNA repair. In Deinococcus radiodurans (strain ATCC 13939 / DSM 20539 / JCM 16871 / CCUG 27074 / LMG 4051 / NBRC 15346 / NCIMB 9279 / VKM B-1422 / R1), this protein is LexA repressor.